The following is an 871-amino-acid chain: DNA mismatch repair protein MutS (871 aa).

621-628 (GPNMAGKS) contacts ATP.

The protein belongs to the DNA mismatch repair MutS family.

In terms of biological role, this protein is involved in the repair of mismatches in DNA. It is possible that it carries out the mismatch recognition step. This protein has a weak ATPase activity. The polypeptide is DNA mismatch repair protein MutS (Geobacter sulfurreducens (strain ATCC 51573 / DSM 12127 / PCA)).